A 261-amino-acid chain; its full sequence is Ethanolamine ammonia-lyase small subunit (261 aa).

Positions 158, 179, and 208 each coordinate adenosylcob(III)alamin.

It belongs to the EutC family. In terms of assembly, the basic unit is a heterodimer which dimerizes to form tetramers. The heterotetramers trimerize; 6 large subunits form a core ring with 6 small subunits projecting outwards. The cofactor is adenosylcob(III)alamin.

The protein resides in the bacterial microcompartment. The catalysed reaction is ethanolamine = acetaldehyde + NH4(+). It functions in the pathway amine and polyamine degradation; ethanolamine degradation. Catalyzes the deamination of various vicinal amino-alcohols to oxo compounds. Allows this organism to utilize ethanolamine as the sole source of nitrogen and carbon in the presence of external vitamin B12. This chain is Ethanolamine ammonia-lyase small subunit, found in Bradyrhizobium diazoefficiens (strain JCM 10833 / BCRC 13528 / IAM 13628 / NBRC 14792 / USDA 110).